A 364-amino-acid polypeptide reads, in one-letter code: Chorismate synthase (364 aa).

Residues 41–60 are disordered; it reads MQHDLDRRRPGTSRYTTARR. The NADP(+) site is built by Arg48 and Arg54. Residues 125–127, 238–239, Gly278, 293–297, and Arg319 each bind FMN; these read RSS, NA, and KPTSS.

Belongs to the chorismate synthase family. In terms of assembly, homotetramer. The cofactor is FMNH2.

It carries out the reaction 5-O-(1-carboxyvinyl)-3-phosphoshikimate = chorismate + phosphate. The protein operates within metabolic intermediate biosynthesis; chorismate biosynthesis; chorismate from D-erythrose 4-phosphate and phosphoenolpyruvate: step 7/7. Its function is as follows. Catalyzes the anti-1,4-elimination of the C-3 phosphate and the C-6 proR hydrogen from 5-enolpyruvylshikimate-3-phosphate (EPSP) to yield chorismate, which is the branch point compound that serves as the starting substrate for the three terminal pathways of aromatic amino acid biosynthesis. This reaction introduces a second double bond into the aromatic ring system. This Shewanella sp. (strain MR-4) protein is Chorismate synthase.